Here is a 285-residue protein sequence, read N- to C-terminus: Avenin-like b1 (285 aa).

The first 18 residues, 1–18 (MKVFILALLALTATTAIA), serve as a signal peptide directing secretion.

Belongs to the prolamin family. Post-translationally, contains disulfide bonds.

Its function is as follows. Seed storage protein. Might be integrated via inter-chain disulfide bonds within the glutenin polymer. This is Avenin-like b1 (AVNLB) from Triticum aestivum (Wheat).